The primary structure comprises 82 residues: uncharacterized protein (82 aa).

The 2Fe-2S ferredoxin-type domain occupies 1 to 82 (MKIHLIRHNT…HVESDIEIDL (82 aa)). [2Fe-2S] cluster contacts are provided by Cys-35, Cys-40, Cys-43, and Cys-72.

[2Fe-2S] cluster is required as a cofactor.

This is an uncharacterized protein from Haemophilus influenzae (strain ATCC 51907 / DSM 11121 / KW20 / Rd).